The following is a 593-amino-acid chain: Auxin response factor 12 (593 aa).

The segment at residues 126–228 (FTKVLTASDT…ELRVGIRRAR (103 aa)) is a DNA-binding region (TF-B3). One can recognise a PB1 domain in the interval 511-592 (RTCTKVQMQG…MVKKIFIQKR (82 aa)).

It belongs to the ARF family. In terms of assembly, homodimers and heterodimers.

Its subcellular location is the nucleus. Its function is as follows. Auxin response factors (ARFs) are transcriptional factors that bind specifically to the DNA sequence 5'-TGTCTC-3' found in the auxin-responsive promoter elements (AuxREs). Could act as transcriptional activator or repressor. Formation of heterodimers with Aux/IAA proteins may alter their ability to modulate early auxin response genes expression. In Arabidopsis thaliana (Mouse-ear cress), this protein is Auxin response factor 12 (ARF12).